The following is a 360-amino-acid chain: MNIYDQLQAVEDRYEELGELLSDPEVVSDTKRFMALSKEEASTRETVAAYRQYKAIIQSIDDAEEMIKEAGGDPDIEEMAKEELKEAKSAKEAYEDKLKLLLLPKDPNDDKNIILEIRGAAGGDEAALFAGDLLAMYQKFAESQGWRFEVMEASYNGVGGIKEVVAMVSGQSVYSKLKYESGAHRVQRVPVTESQGRVHTSTATVLVMPEVEEVEYDIDPKDLRIDIYHASGAGGQNVNKVATAVRIVHLPTNIKVEMQEERTQQKNRDKAMKIIRARVADHFAQIAQDEQDAERKSTIGTGDRSERIRTYNFPQNRVTDHRIGLTLQKLDTILSGKLDEIVDALVLYDQTQKLESLNNQ.

The residue at position 236 (Gln-236) is an N5-methylglutamine. Residues 288 to 308 form a disordered region; it reads QDEQDAERKSTIGTGDRSERI. The span at 293–308 shows a compositional bias: basic and acidic residues; sequence AERKSTIGTGDRSERI.

The protein belongs to the prokaryotic/mitochondrial release factor family. Methylated by PrmC. Methylation increases the termination efficiency of RF1.

The protein localises to the cytoplasm. Its function is as follows. Peptide chain release factor 1 directs the termination of translation in response to the peptide chain termination codons UAG and UAA. This chain is Peptide chain release factor 1, found in Streptococcus equi subsp. equi (strain 4047).